The primary structure comprises 265 residues: Undecaprenyl-diphosphatase (265 aa).

Helical transmembrane passes span 42–62 (AATF…VLYW), 82–102 (GIML…AAHS), 108–128 (LFTP…MLLV), 143–163 (MSPA…WPGF), 181–201 (GLAA…ATGY), 221–241 (GFVV…ALVG), and 248–264 (FAWY…YFMA).

This sequence belongs to the UppP family.

It localises to the cell inner membrane. It catalyses the reaction di-trans,octa-cis-undecaprenyl diphosphate + H2O = di-trans,octa-cis-undecaprenyl phosphate + phosphate + H(+). Functionally, catalyzes the dephosphorylation of undecaprenyl diphosphate (UPP). Confers resistance to bacitracin. In Nitratidesulfovibrio vulgaris (strain DP4) (Desulfovibrio vulgaris), this protein is Undecaprenyl-diphosphatase.